We begin with the raw amino-acid sequence, 129 residues long: Aspartate 1-decarboxylase (129 aa).

Residue Ser25 is the Schiff-base intermediate with substrate; via pyruvic acid of the active site. Residue Ser25 is modified to Pyruvic acid (Ser). Thr57 serves as a coordination point for substrate. Tyr58 (proton donor) is an active-site residue. Residue Gly73–Ala75 coordinates substrate.

It belongs to the PanD family. As to quaternary structure, heterooctamer of four alpha and four beta subunits. Requires pyruvate as cofactor. In terms of processing, is synthesized initially as an inactive proenzyme, which is activated by self-cleavage at a specific serine bond to produce a beta-subunit with a hydroxyl group at its C-terminus and an alpha-subunit with a pyruvoyl group at its N-terminus.

It is found in the cytoplasm. It carries out the reaction L-aspartate + H(+) = beta-alanine + CO2. Its pathway is cofactor biosynthesis; (R)-pantothenate biosynthesis; beta-alanine from L-aspartate: step 1/1. Catalyzes the pyruvoyl-dependent decarboxylation of aspartate to produce beta-alanine. This Prosthecochloris aestuarii (strain DSM 271 / SK 413) protein is Aspartate 1-decarboxylase.